The sequence spans 471 residues: UDP-N-acetylmuramate--L-alanine ligase (471 aa).

114–120 (GTHGKTT) is an ATP binding site.

Belongs to the MurCDEF family.

It localises to the cytoplasm. It carries out the reaction UDP-N-acetyl-alpha-D-muramate + L-alanine + ATP = UDP-N-acetyl-alpha-D-muramoyl-L-alanine + ADP + phosphate + H(+). It participates in cell wall biogenesis; peptidoglycan biosynthesis. Cell wall formation. This chain is UDP-N-acetylmuramate--L-alanine ligase, found in Allorhizobium ampelinum (strain ATCC BAA-846 / DSM 112012 / S4) (Agrobacterium vitis (strain S4)).